The following is a 122-amino-acid chain: Large ribosomal subunit protein uL14 (122 aa).

This sequence belongs to the universal ribosomal protein uL14 family. As to quaternary structure, part of the 50S ribosomal subunit. Forms a cluster with proteins L3 and L19. In the 70S ribosome, L14 and L19 interact and together make contacts with the 16S rRNA in bridges B5 and B8.

Functionally, binds to 23S rRNA. Forms part of two intersubunit bridges in the 70S ribosome. The protein is Large ribosomal subunit protein uL14 of Sulfurovum sp. (strain NBC37-1).